A 283-amino-acid polypeptide reads, in one-letter code: uncharacterized protein (283 aa).

This is an uncharacterized protein from Caenorhabditis elegans.